We begin with the raw amino-acid sequence, 626 residues long: DNA (cytosine-5)-methyltransferase DRM2 (626 aa).

2 consecutive UBA domains span residues 59 to 101 (GFSD…ISKY) and 109 to 150 (SSKS…LLSC). Residues 160–187 (VEEEDGIDWSSSDDDTNYTDMLNSDDEK) show a composition bias toward acidic residues. Disordered regions lie at residues 160-196 (VEEE…ENGS) and 245-282 (TEHE…PNPM). Residues 190–232 (NSNENGSKIRSLVKMGFSELEASLAVERCGENVDIAELTDFLC) form the UBA 3 domain. Over residues 262 to 276 (ESKGEPRSSVDDEPI) the composition is skewed to basic and acidic residues. The SAM-dependent MTase DRM-type domain maps to 295 to 626 (THRSLPELAR…EVVRARMRGS (332 aa)).

The protein belongs to the class I-like SAM-binding methyltransferase superfamily. DRM-methyltransferase family. In terms of assembly, interacts with RDM1. Expressed in roots, inflorescences and at lower levels in leaves.

The protein resides in the nucleus. It localises to the nucleoplasm. It catalyses the reaction a 2'-deoxycytidine in DNA + S-adenosyl-L-methionine = a 5-methyl-2'-deoxycytidine in DNA + S-adenosyl-L-homocysteine + H(+). Functionally, involved in de novo DNA methylation. Controls asymmetric and CpNpG methylation. Required for FWA gene silencing but not for the maintenance of SUP gene silencing. Functionally redundant to CMT3 to maintain non-CpG methylation. Involved in RNA-directed DNA methylation (RdDM). Acts as major DNA methyltransferase in the RdDM pathway, and is essential for RNA-directed de novo DNA methylation of cytosines in all sequence contexts. Associates with long non-coding RNA (lncRNA) produced by RNA polymerase V (Pol V). This association is dependent on AGO4 and IDN2, and results in DNA methylation of RdDM target loci. This is DNA (cytosine-5)-methyltransferase DRM2 (DRM2) from Arabidopsis thaliana (Mouse-ear cress).